Consider the following 87-residue polypeptide: Phosphoribosyl-ATP pyrophosphatase (87 aa).

Belongs to the PRA-PH family.

Its subcellular location is the cytoplasm. It carries out the reaction 1-(5-phospho-beta-D-ribosyl)-ATP + H2O = 1-(5-phospho-beta-D-ribosyl)-5'-AMP + diphosphate + H(+). It participates in amino-acid biosynthesis; L-histidine biosynthesis; L-histidine from 5-phospho-alpha-D-ribose 1-diphosphate: step 2/9. The sequence is that of Phosphoribosyl-ATP pyrophosphatase from Salinibacter ruber (strain DSM 13855 / M31).